The primary structure comprises 162 residues: uncharacterized protein (162 aa).

The protein belongs to the LOR family.

This is an uncharacterized protein from Bacillus subtilis (strain 168).